The primary structure comprises 173 residues: MEYEALTGTLWDKGTFWVTVAVLIFLAFFGRKIVGAITTMLDQRSAAIQHELDEASRLRAEAEAMLKDAESRREAALAQAKDMLAMAGREAERLAADLLAEAEASARRREQMARERISAAEAAAIAEVRDAAAALAARAAEQILKETIDEAHDRGLIDQAIGGLPAALRQKAA.

A helical transmembrane segment spans residues 15–37 (TFWVTVAVLIFLAFFGRKIVGAI).

The protein belongs to the ATPase B chain family. As to quaternary structure, F-type ATPases have 2 components, F(1) - the catalytic core - and F(0) - the membrane proton channel. F(1) has five subunits: alpha(3), beta(3), gamma(1), delta(1), epsilon(1). F(0) has three main subunits: a(1), b(2) and c(10-14). The alpha and beta chains form an alternating ring which encloses part of the gamma chain. F(1) is attached to F(0) by a central stalk formed by the gamma and epsilon chains, while a peripheral stalk is formed by the delta and b chains.

It localises to the cell inner membrane. F(1)F(0) ATP synthase produces ATP from ADP in the presence of a proton or sodium gradient. F-type ATPases consist of two structural domains, F(1) containing the extramembraneous catalytic core and F(0) containing the membrane proton channel, linked together by a central stalk and a peripheral stalk. During catalysis, ATP synthesis in the catalytic domain of F(1) is coupled via a rotary mechanism of the central stalk subunits to proton translocation. In terms of biological role, component of the F(0) channel, it forms part of the peripheral stalk, linking F(1) to F(0). This chain is ATP synthase subunit b 1, found in Acidiphilium cryptum (strain JF-5).